The primary structure comprises 362 residues: Probable S-adenosylmethionine-dependent methyltransferase At5g37990 (362 aa).

Positions 19, 66, 71, 107, 136, and 137 each coordinate S-adenosyl-L-homocysteine. Mg(2+) contacts are provided by N175, E261, and F263.

This sequence belongs to the methyltransferase superfamily. Type-7 methyltransferase family. As to quaternary structure, homodimer. Mg(2+) serves as cofactor.

In Arabidopsis thaliana (Mouse-ear cress), this protein is Probable S-adenosylmethionine-dependent methyltransferase At5g37990.